The following is a 385-amino-acid chain: MQSRFTFLATRTLKSTTTKAKNRTFSSSTVESSTKQPPQFSQTLAGLRARLAVESPTLSDFIHLQSNNTYSVEVGTKKKPLPKPKWMREAIPGGEKYVQIKKKLRELKLHTVCEEAKCPNLGECWSGGETGTATATIMILGDTCTRGCRFCNVKTSRTPPPPDPNEPTNVAEAIASWGLDYVVITSVDRDDLADQGSGHFAETVHKLKTLKPNMLIEALVPDFRGDRGCVEKVAKSGLDVFAHNIETVEELQSSVRDHRANFKQSLDVLMMAKEYAPPGTLTKTSIMLGCGEAPEQVVKTMEKVRAAGVDVMTFGQYMRPSKRHMPVSEYITPDAFEKYKTLGMEMGFRYVASGPMVRSSYKAGEFYIKSMIESDRSVSSQLPIS.

The tract at residues 18 to 40 (TKAKNRTFSSSTVESSTKQPPQF) is disordered. Cys-113, Cys-118, Cys-124, Cys-144, Cys-148, Cys-151, and Ser-360 together coordinate [4Fe-4S] cluster. The Radical SAM core domain maps to 129–349 (ETGTATATIM…KTLGMEMGFR (221 aa)).

It belongs to the radical SAM superfamily. Lipoyl synthase family. The cofactor is [4Fe-4S] cluster.

The protein resides in the mitochondrion. It carries out the reaction [[Fe-S] cluster scaffold protein carrying a second [4Fe-4S](2+) cluster] + N(6)-octanoyl-L-lysyl-[protein] + 2 oxidized [2Fe-2S]-[ferredoxin] + 2 S-adenosyl-L-methionine + 4 H(+) = [[Fe-S] cluster scaffold protein] + N(6)-[(R)-dihydrolipoyl]-L-lysyl-[protein] + 4 Fe(3+) + 2 hydrogen sulfide + 2 5'-deoxyadenosine + 2 L-methionine + 2 reduced [2Fe-2S]-[ferredoxin]. The protein operates within protein modification; protein lipoylation via endogenous pathway; protein N(6)-(lipoyl)lysine from octanoyl-[acyl-carrier-protein]: step 2/2. In terms of biological role, catalyzes the radical-mediated insertion of two sulfur atoms into the C-6 and C-8 positions of the octanoyl moiety bound to the lipoyl domains of lipoate-dependent enzymes, thereby converting the octanoylated domains into lipoylated derivatives. The chain is Lipoyl synthase, mitochondrial from Populus trichocarpa (Western balsam poplar).